A 424-amino-acid polypeptide reads, in one-letter code: Calreticulin (424 aa).

A signal peptide spans 1–19 (MRLLLCLIFLVFVFNFALS). C105 and C137 form a disulfide bridge. An alpha-D-glucoside is bound by residues Y109, K111, Y128, and D135. Tandem repeats lie at residues 191-202 (IQAGNLADDWEL), 210-221 (DPKQSKPVDWVD), 227-238 (DPEDVKPAGHDD), 246-256 (PEAVKPEDWNE), 260-270 (GEWEAPTIANP), 274-284 (GEWKAKKIPNP), and 288-298 (GEWVHPLIDNP). Positions 191 to 256 (IQAGNLADDW…EAVKPEDWNE (66 aa)) are 4 X 12 AA approximate repeats. Positions 260-298 (GEWEAPTIANPEYKGEWKAKKIPNPEYKGEWVHPLIDNP) are 3 X 11 AA approximate repeats. E318 provides a ligand contact to an alpha-D-glucoside. Basic and acidic residues predominate over residues 370 to 385 (RKKADEKLAAEKAAEK). Residues 370–424 (RKKADEKLAAEKAAEKEAEEADEEEEEVAEEDLVKTDDKKEEVKKSTKKVDHDEL) form a disordered region. Acidic residues predominate over residues 386–400 (EAEEADEEEEEVAEE). Residues 401–424 (DLVKTDDKKEEVKKSTKKVDHDEL) are compositionally biased toward basic and acidic residues. The Prevents secretion from ER motif lies at 421 to 424 (HDEL).

This sequence belongs to the calreticulin family.

The protein resides in the endoplasmic reticulum lumen. Functionally, molecular calcium-binding chaperone promoting folding, oligomeric assembly and quality control in the ER via the calreticulin/calnexin cycle. This lectin may interact transiently with almost all of the monoglucosylated glycoproteins that are synthesized in the ER. In Dictyostelium discoideum (Social amoeba), this protein is Calreticulin (crtA).